The sequence spans 901 residues: HTH-type transcriptional regulator MalT (901 aa).

An ATP-binding site is contributed by 39–46 (SPAGYGKT). The HTH luxR-type domain occupies 829–894 (ELIRTSPLTQ…DAVQHAQQLL (66 aa)). Positions 853-872 (NEQIAGELDVAATTIKTHIR) form a DNA-binding region, H-T-H motif.

This sequence belongs to the MalT family. In terms of assembly, monomer in solution. Oligomerizes to an active state in the presence of the positive effectors ATP and maltotriose.

Activated by ATP and maltotriose, which are both required for DNA binding. Positively regulates the transcription of the maltose regulon whose gene products are responsible for uptake and catabolism of malto-oligosaccharides. Specifically binds to the promoter region of its target genes, recognizing a short DNA motif called the MalT box. The protein is HTH-type transcriptional regulator MalT of Klebsiella pneumoniae (strain 342).